Here is a 607-residue protein sequence, read N- to C-terminus: All-trans-retinol 13,14-reductase (607 aa).

A signal peptide spans 1–22 (MWFAVVAIFLALVAFLYRYVVG).

Belongs to the carotenoid/retinoid oxidoreductase family. CrtISO subfamily. The cofactor is NAD(+). NADP(+) serves as cofactor. FAD is required as a cofactor.

Its subcellular location is the endoplasmic reticulum membrane. It catalyses the reaction all-trans-13,14-dihydroretinol + A = all-trans-retinol + AH2. In terms of biological role, catalyzes the saturation of all-trans-retinol to all-trans-13,14-dihydroretinol. In addition, saturates the 7-8 double bond of all-trans-retinol to produce all-trans-7,8-dihydroretinol. Can also use vitamin A2 (all-trans-3,4-didehydroretinol) as a substrate, to produce all-trans-13,14-dihydro-3,4-didehydroretinol or all-trans-7,8-dihydro-3,4-didehydroretinol. May play a role in vitamin A metabolism. In Danio rerio (Zebrafish), this protein is All-trans-retinol 13,14-reductase.